We begin with the raw amino-acid sequence, 182 residues long: IQ domain-containing protein F1 (182 aa).

Composition is skewed to basic and acidic residues over residues 1 to 10 and 31 to 43; these read MGEEQQKPEE and ETEK…KQEL. Residues 1–43 are disordered; sequence MGEEQQKPEELNAPTDDAPQEKQQPADLSSETEKAKSKKKQEL. 2 consecutive IQ domains span residues 45 to 74 and 101 to 130; these read EKDQ…SAWI and EQWA…AVRT.

Interacts with calmodulin. Specifically expressed in testes and mature spermatozoa (at protein level).

It is found in the cytoplasmic vesicle. Its subcellular location is the secretory vesicle. The protein localises to the acrosome. Its function is as follows. Involved in sperm capacitation and acrosome reaction. The chain is IQ domain-containing protein F1 from Mus musculus (Mouse).